The primary structure comprises 266 residues: MQTDNTKSNTNKTAKQEWWSCAFVICIALLIRILIMEPFTVPTGSMKATILENDYIFSTKYSYGYSNYSLSFFDFIPLFKGRIFAREPERGDIVVFRPPNDMNVRYIKRLIGLPGDKIQLIDDVIYINDKKIERTEVGTYTSEDGIKYLKFKETLPNGRTYFSYKLAPIFSVIYNDRYGNTDVFYVPEGKYFFLGDNRDQSNDSRVNLGFVPFENFIAKAQFIWFSTKINWWDNDIGVMNLVLRLKPWIESVRLNRIFRNLYNTDE.

Over 1 to 20 (MQTDNTKSNTNKTAKQEWWS) the chain is Cytoplasmic. The helical transmembrane segment at 21-41 (CAFVICIALLIRILIMEPFTV) threads the bilayer. Topologically, residues 42–266 (PTGSMKATIL…IFRNLYNTDE (225 aa)) are periplasmic. Active-site residues include serine 45 and lysine 108.

This sequence belongs to the peptidase S26 family.

The protein localises to the cell inner membrane. The catalysed reaction is Cleavage of hydrophobic, N-terminal signal or leader sequences from secreted and periplasmic proteins.. In Rickettsia akari (strain Hartford), this protein is Signal peptidase I (lepB).